A 449-amino-acid polypeptide reads, in one-letter code: UDP-N-acetylmuramate--L-alanine ligase (449 aa).

118-124 (GTHGKTT) contacts ATP.

The protein belongs to the MurCDEF family.

The protein localises to the cytoplasm. The catalysed reaction is UDP-N-acetyl-alpha-D-muramate + L-alanine + ATP = UDP-N-acetyl-alpha-D-muramoyl-L-alanine + ADP + phosphate + H(+). It functions in the pathway cell wall biogenesis; peptidoglycan biosynthesis. Its function is as follows. Cell wall formation. The chain is UDP-N-acetylmuramate--L-alanine ligase from Flavobacterium johnsoniae (strain ATCC 17061 / DSM 2064 / JCM 8514 / BCRC 14874 / CCUG 350202 / NBRC 14942 / NCIMB 11054 / UW101) (Cytophaga johnsonae).